A 276-amino-acid polypeptide reads, in one-letter code: Nickel import system permease protein NikC (276 aa).

Helical transmembrane passes span 10–30, 73–93, 108–128, 186–206, and 238–258; these read LIFFVFGAFIFVMIVLQFFVS, LFVTVLTLIAIVVIGVTLGLF, FIDVGLSIPEFIIVIALASFF, IIPAIIVLMVVDFGKIILYIS, and IMLIAPASVIAITILIFNLTG. The 190-residue stretch at 69–258 folds into the ABC transmembrane type-1 domain; sequence ARSTLFVTVL…ITILIFNLTG (190 aa).

This sequence belongs to the binding-protein-dependent transport system permease family. OppBC subfamily. In terms of assembly, the complex is composed of two ATP-binding proteins (NikD and NikE), two transmembrane proteins (NikB and NikC) and a solute-binding protein (NikA).

The protein resides in the cell membrane. In terms of biological role, part of the ABC transporter complex NikABCDE (Opp2) involved in nickel import. Probably responsible for the translocation of the substrate across the membrane. The polypeptide is Nickel import system permease protein NikC (Staphylococcus aureus (strain bovine RF122 / ET3-1)).